A 287-amino-acid chain; its full sequence is Hydroxysteroid 11-beta-dehydrogenase 1-like protein (287 aa).

A signal peptide spans Met-1–Ala-15. NADP(+)-binding positions include Gly-36–Thr-62, Asp-87–Met-88, and Asn-114–Leu-116. Ser-165 contacts substrate. Tyr-178 (proton acceptor) is an active-site residue. Residues Tyr-178 to Lys-182 and Gly-211 to Ser-217 contribute to the NADP(+) site. An N-linked (GlcNAc...) asparagine glycan is attached at Asn-280.

This sequence belongs to the short-chain dehydrogenases/reductases (SDR) family.

It is found in the secreted. It catalyses the reaction cortisone + NADPH + H(+) = cortisol + NADP(+). Functionally, unidirectional NADP(+)-dependent cortisol dehydrogenase (in vitro). This is Hydroxysteroid 11-beta-dehydrogenase 1-like protein (HSD11B1L) from Bos taurus (Bovine).